The chain runs to 450 residues: ATP-dependent protease ATPase subunit HslU (450 aa).

Residues Val29, 71–76 (GVGKTE), Asp261, Glu328, and Arg400 contribute to the ATP site.

The protein belongs to the ClpX chaperone family. HslU subfamily. As to quaternary structure, a double ring-shaped homohexamer of HslV is capped on each side by a ring-shaped HslU homohexamer. The assembly of the HslU/HslV complex is dependent on binding of ATP.

Its subcellular location is the cytoplasm. Its function is as follows. ATPase subunit of a proteasome-like degradation complex; this subunit has chaperone activity. The binding of ATP and its subsequent hydrolysis by HslU are essential for unfolding of protein substrates subsequently hydrolyzed by HslV. HslU recognizes the N-terminal part of its protein substrates and unfolds these before they are guided to HslV for hydrolysis. This is ATP-dependent protease ATPase subunit HslU from Rickettsia conorii (strain ATCC VR-613 / Malish 7).